Here is a 168-residue protein sequence, read N- to C-terminus: Avenin-like a1 (168 aa).

The N-terminal stretch at Met1–Ala19 is a signal peptide.

This sequence belongs to the prolamin family. Post-translationally, contains 7 disulfide bonds.

Functionally, seed storage protein. Not integrated in the gluten polymer through disulfide bonds, unless incorporated by reduction and reoxidation during dough making. Increases dough strength and bread volume, but decreases dough stability when added into a base wheat flour. The sequence is that of Avenin-like a1 (AVNLA) from Triticum aestivum (Wheat).